The sequence spans 266 residues: 5'-nucleotidase SurE (266 aa).

A divalent metal cation contacts are provided by D8, D9, S40, and N98.

It belongs to the SurE nucleotidase family. It depends on a divalent metal cation as a cofactor.

The protein localises to the cytoplasm. The catalysed reaction is a ribonucleoside 5'-phosphate + H2O = a ribonucleoside + phosphate. Its function is as follows. Nucleotidase that shows phosphatase activity on nucleoside 5'-monophosphates. This Parasynechococcus marenigrum (strain WH8102) protein is 5'-nucleotidase SurE.